A 293-amino-acid polypeptide reads, in one-letter code: Ribonuclease HII (293 aa).

Residues 81 to 271 (THIAGVDEAG…VREALGLPTG (191 aa)) enclose the RNase H type-2 domain. 3 residues coordinate a divalent metal cation: aspartate 87, glutamate 88, and aspartate 180. A disordered region spans residues 273-293 (PPSALQAELFPEAPSRTGVKS).

It belongs to the RNase HII family. Requires Mn(2+) as cofactor. It depends on Mg(2+) as a cofactor.

Its subcellular location is the cytoplasm. It carries out the reaction Endonucleolytic cleavage to 5'-phosphomonoester.. Its function is as follows. Endonuclease that specifically degrades the RNA of RNA-DNA hybrids. The chain is Ribonuclease HII from Myxococcus xanthus (strain DK1622).